Here is a 182-residue protein sequence, read N- to C-terminus: Isopentenyl-diphosphate Delta-isomerase (182 aa).

Residues H25 and H32 each coordinate Mn(2+). Residues 30–164 (LLHLAFSSWL…PWAFSPWMVM (135 aa)) enclose the Nudix hydrolase domain. C67 is an active-site residue. Residue H69 coordinates Mn(2+). E87 lines the Mg(2+) pocket. Mn(2+)-binding residues include E114 and E116. Residue E116 is part of the active site.

It belongs to the IPP isomerase type 1 family. Homodimer. Requires Mg(2+) as cofactor. The cofactor is Mn(2+).

The protein localises to the cytoplasm. The enzyme catalyses isopentenyl diphosphate = dimethylallyl diphosphate. It functions in the pathway isoprenoid biosynthesis; dimethylallyl diphosphate biosynthesis; dimethylallyl diphosphate from isopentenyl diphosphate: step 1/1. Catalyzes the 1,3-allylic rearrangement of the homoallylic substrate isopentenyl (IPP) to its highly electrophilic allylic isomer, dimethylallyl diphosphate (DMAPP). The protein is Isopentenyl-diphosphate Delta-isomerase of Escherichia coli O127:H6 (strain E2348/69 / EPEC).